The chain runs to 557 residues: Proline--tRNA ligase (557 aa).

Belongs to the class-II aminoacyl-tRNA synthetase family. ProS type 1 subfamily. In terms of assembly, homodimer.

Its subcellular location is the cytoplasm. The enzyme catalyses tRNA(Pro) + L-proline + ATP = L-prolyl-tRNA(Pro) + AMP + diphosphate. Functionally, catalyzes the attachment of proline to tRNA(Pro) in a two-step reaction: proline is first activated by ATP to form Pro-AMP and then transferred to the acceptor end of tRNA(Pro). As ProRS can inadvertently accommodate and process non-cognate amino acids such as alanine and cysteine, to avoid such errors it has two additional distinct editing activities against alanine. One activity is designated as 'pretransfer' editing and involves the tRNA(Pro)-independent hydrolysis of activated Ala-AMP. The other activity is designated 'posttransfer' editing and involves deacylation of mischarged Ala-tRNA(Pro). The misacylated Cys-tRNA(Pro) is not edited by ProRS. In Baumannia cicadellinicola subsp. Homalodisca coagulata, this protein is Proline--tRNA ligase.